Here is a 313-residue protein sequence, read N- to C-terminus: tRNA dimethylallyltransferase 2 (313 aa).

ATP is bound at residue 16-23 (GPTASGKT). 18-23 (TASGKT) is a binding site for substrate. Interaction with substrate tRNA stretches follow at residues 41 to 44 (DSRQ) and 161 to 165 (QRTIR).

Belongs to the IPP transferase family. As to quaternary structure, monomer. The cofactor is Mg(2+).

The enzyme catalyses adenosine(37) in tRNA + dimethylallyl diphosphate = N(6)-dimethylallyladenosine(37) in tRNA + diphosphate. Catalyzes the transfer of a dimethylallyl group onto the adenine at position 37 in tRNAs that read codons beginning with uridine, leading to the formation of N6-(dimethylallyl)adenosine (i(6)A). This Pelobacter propionicus (strain DSM 2379 / NBRC 103807 / OttBd1) protein is tRNA dimethylallyltransferase 2.